Consider the following 382-residue polypeptide: D-galactonate dehydratase (382 aa).

Aspartate 183 serves as a coordination point for Mg(2+). Residue histidine 185 is the Proton donor of the active site. Residues glutamate 209 and glutamate 235 each contribute to the Mg(2+) site. Histidine 285 acts as the Proton acceptor in catalysis.

The protein belongs to the mandelate racemase/muconate lactonizing enzyme family. GalD subfamily. Mg(2+) is required as a cofactor.

The catalysed reaction is D-galactonate = 2-dehydro-3-deoxy-D-galactonate + H2O. It functions in the pathway carbohydrate acid metabolism; D-galactonate degradation; D-glyceraldehyde 3-phosphate and pyruvate from D-galactonate: step 1/3. Catalyzes the dehydration of D-galactonate to 2-keto-3-deoxy-D-galactonate. The protein is D-galactonate dehydratase of Xanthomonas campestris pv. campestris (strain 8004).